The chain runs to 252 residues: 3-deoxy-manno-octulosonate cytidylyltransferase (252 aa).

Belongs to the KdsB family.

It is found in the cytoplasm. It catalyses the reaction 3-deoxy-alpha-D-manno-oct-2-ulosonate + CTP = CMP-3-deoxy-beta-D-manno-octulosonate + diphosphate. It functions in the pathway nucleotide-sugar biosynthesis; CMP-3-deoxy-D-manno-octulosonate biosynthesis; CMP-3-deoxy-D-manno-octulosonate from 3-deoxy-D-manno-octulosonate and CTP: step 1/1. The protein operates within bacterial outer membrane biogenesis; lipopolysaccharide biosynthesis. Activates KDO (a required 8-carbon sugar) for incorporation into bacterial lipopolysaccharide in Gram-negative bacteria. This Vibrio campbellii (strain ATCC BAA-1116) protein is 3-deoxy-manno-octulosonate cytidylyltransferase.